Consider the following 2287-residue polypeptide: Protein Ycf2 (2287 aa).

1632-1639 (GSIGTGRS) is an ATP binding site.

The protein belongs to the Ycf2 family.

Its subcellular location is the plastid. The protein resides in the chloroplast stroma. In terms of biological role, probable ATPase of unknown function. Its presence in a non-photosynthetic plant (Epifagus virginiana) and experiments in tobacco indicate that it has an essential function which is probably not related to photosynthesis. This chain is Protein Ycf2, found in Calycanthus floridus var. glaucus (Eastern sweetshrub).